Consider the following 1682-residue polypeptide: 1-phosphatidylinositol 4,5-bisphosphate phosphodiesterase eta-1 (1682 aa).

In terms of domain architecture, PH spans Ser20–Ala128. EF-hand domains follow at residues Thr142 to Asn177, Leu178 to Arg214, and Asp226 to Met246. Residues Asp155, Asn157, Asp159, and Glu166 each coordinate Ca(2+). The PI-PLC X-box domain maps to Gln299–Lys444. Residue His314 is part of the active site. Asn315, Glu344, and Asp346 together coordinate Ca(2+). The active site involves His358. Glu393 provides a ligand contact to Ca(2+). Positions 442 and 444 each coordinate substrate. Residues Leu534–Arg588 form a disordered region. Positions Gly553–Ser564 are enriched in basic residues. Positions Leu602–Cys715 constitute a PI-PLC Y-box domain. Residues Ser628 and Arg655 each contribute to the substrate site. Positions Lys716–Gly844 constitute a C2 domain. Positions 759, 761, 785, 814, 815, and 816 each coordinate Ca(2+). Residues Asp992–His1018 are compositionally biased toward basic and acidic residues. Disordered stretches follow at residues Asp992–Arg1083, Asn1296–Val1321, and Arg1581–Val1603. Residues Phe1019 to Leu1033 are compositionally biased toward low complexity. 2 stretches are compositionally biased toward polar residues: residues Gln1040–Glu1050 and Asn1065–His1074. Positions Arg1581 to Lys1590 are enriched in basic and acidic residues.

The cofactor is Ca(2+). Expressed in brain and to a lower extent in lung. In brain, it is found in cerebrum, cerebellum and spinal cord.

It localises to the cytoplasm. Its subcellular location is the membrane. It carries out the reaction a 1,2-diacyl-sn-glycero-3-phospho-(1D-myo-inositol-4,5-bisphosphate) + H2O = 1D-myo-inositol 1,4,5-trisphosphate + a 1,2-diacyl-sn-glycerol + H(+). The production of the second messenger molecules diacylglycerol (DAG) and inositol 1,4,5-trisphosphate (IP3) is mediated by calcium-activated phosphatidylinositol-specific phospholipase C enzymes. This chain is 1-phosphatidylinositol 4,5-bisphosphate phosphodiesterase eta-1, found in Mus musculus (Mouse).